Consider the following 384-residue polypeptide: Spermidine/putrescine import ATP-binding protein PotA (384 aa).

In terms of domain architecture, ABC transporter spans 26–260 (ISLEKVSKTY…PATRFVAGFI (235 aa)). 62 to 69 (GPSGCGKT) is an ATP binding site.

This sequence belongs to the ABC transporter superfamily. Spermidine/putrescine importer (TC 3.A.1.11.1) family. In terms of assembly, the complex is composed of two ATP-binding proteins (PotA), two transmembrane proteins (PotB and PotC) and a solute-binding protein (PotD).

It localises to the cell membrane. The enzyme catalyses ATP + H2O + polyamine-[polyamine-binding protein]Side 1 = ADP + phosphate + polyamineSide 2 + [polyamine-binding protein]Side 1.. Functionally, part of the ABC transporter complex PotABCD involved in spermidine/putrescine import. Responsible for energy coupling to the transport system. The chain is Spermidine/putrescine import ATP-binding protein PotA from Thermobifida fusca (strain YX).